The chain runs to 99 residues: Co-chaperonin GroES (99 aa).

It belongs to the GroES chaperonin family. As to quaternary structure, heptamer of 7 subunits arranged in a ring. Interacts with the chaperonin GroEL.

It localises to the cytoplasm. Together with the chaperonin GroEL, plays an essential role in assisting protein folding. The GroEL-GroES system forms a nano-cage that allows encapsulation of the non-native substrate proteins and provides a physical environment optimized to promote and accelerate protein folding. GroES binds to the apical surface of the GroEL ring, thereby capping the opening of the GroEL channel. The polypeptide is Co-chaperonin GroES (Corynebacterium jeikeium (strain K411)).